Consider the following 209-residue polypeptide: Ribosomal RNA large subunit methyltransferase E (209 aa).

Residues Gly-63, Trp-65, Asp-83, Asp-99, and Asp-124 each contribute to the S-adenosyl-L-methionine site. The active-site Proton acceptor is Lys-164.

The protein belongs to the class I-like SAM-binding methyltransferase superfamily. RNA methyltransferase RlmE family.

The protein localises to the cytoplasm. The catalysed reaction is uridine(2552) in 23S rRNA + S-adenosyl-L-methionine = 2'-O-methyluridine(2552) in 23S rRNA + S-adenosyl-L-homocysteine + H(+). In terms of biological role, specifically methylates the uridine in position 2552 of 23S rRNA at the 2'-O position of the ribose in the fully assembled 50S ribosomal subunit. This is Ribosomal RNA large subunit methyltransferase E from Escherichia coli O81 (strain ED1a).